Here is a 440-residue protein sequence, read N- to C-terminus: Gamma-aminobutyric acid receptor subunit pi (440 aa).

Residues 1–23 form the signal peptide; that stretch reads MKRSLHLTFVCLSLFSARMCVQG. Residues 24 to 241 are Extracellular-facing; it reads NQFNIEVSRS…LVLQFELQRN (218 aa). 3 N-linked (GlcNAc...) asparagine glycosylation sites follow: N43, N102, and N145. The cysteines at positions 160 and 174 are disulfide-linked. N196 and N228 each carry an N-linked (GlcNAc...) asparagine glycan. The helical transmembrane segment at 242–262 threads the bilayer; that stretch reads VLYFILETYVPSTFLVVLSWV. At 263–270 the chain is on the cytoplasmic side; sequence SFWISLDS. A helical transmembrane segment spans residues 271–290; the sequence is VPARTCIGVTTVLSMTTLMI. Residues 291–301 lie on the Extracellular side of the membrane; the sequence is GSRTSLPNTNC. A helical membrane pass occupies residues 302–322; sequence FIKAIDVYLGICFSFVFGALL. At 323–419 the chain is on the cytoplasmic side; that stretch reads EYAVAHYSSL…NPSNVDRYSK (97 aa). The helical transmembrane segment at 420 to 440 threads the bilayer; that stretch reads LLFPLIFMLANVFYWAYYMYF.

It belongs to the ligand-gated ion channel (TC 1.A.9) family. Gamma-aminobutyric acid receptor (TC 1.A.9.5) subfamily. GABRP sub-subfamily. In terms of assembly, heteropentamer, formed by a combination of alpha (GABRA1-6), beta (GABRB1-3), gamma (GABRG1-3), delta (GABRD), epsilon (GABRE), rho (GABRR1-3), pi (GABRP) and theta (GABRQ) chains, each subunit exhibiting distinct physiological and pharmacological properties.

Its subcellular location is the cell membrane. The protein localises to the apical cell membrane. It carries out the reaction chloride(in) = chloride(out). In terms of biological role, pi subunit of the heteropentameric ligand-gated chloride channel gated by gamma-aminobutyric acid (GABA). GABA-gated chloride channels, also named GABA(A) receptors (GABAAR), consist of five subunits arranged around a central pore and contain GABA active binding site(s) located at the alpha and beta subunit interfaces. When activated by GABA, GABAARs selectively allow the flow of chloride anions across the cell membrane down their electrochemical gradient. Pi-containing GABAARs are mostly located in peripheral tissues. In the uterus, pi subunits modulate uterus contraction by altering the sensitivity of GABAARs to pregnanolone. In the lungs, pi-containing GABAARs contribute to pulmonary fluid transport via luminal secretion of chloride. The protein is Gamma-aminobutyric acid receptor subunit pi (GABRP) of Bos taurus (Bovine).